The following is a 106-amino-acid chain: MTASIAQQKIRIRLKAFDRRMLDLSCEKIIQTADTTSASAIGPIPLPTKRKIYCVLRSPHVDKDSREHFETRTHRRLIDIYSPSAKTIDALMKLDLPSGVDIEVKL.

Belongs to the universal ribosomal protein uS10 family. As to quaternary structure, part of the 30S ribosomal subunit.

Involved in the binding of tRNA to the ribosomes. This chain is Small ribosomal subunit protein uS10, found in Prochlorococcus marinus (strain MIT 9312).